The sequence spans 184 residues: ATP synthase subunit b 1 (184 aa).

A helical membrane pass occupies residues 4–24; it reads LSILAVLAASPAMAATGPFLS.

This sequence belongs to the ATPase B chain family. In terms of assembly, F-type ATPases have 2 components, F(1) - the catalytic core - and F(0) - the membrane proton channel. F(1) has five subunits: alpha(3), beta(3), gamma(1), delta(1), epsilon(1). F(0) has three main subunits: a(1), b(2) and c(10-14). The alpha and beta chains form an alternating ring which encloses part of the gamma chain. F(1) is attached to F(0) by a central stalk formed by the gamma and epsilon chains, while a peripheral stalk is formed by the delta and b chains.

Its subcellular location is the cell inner membrane. In terms of biological role, f(1)F(0) ATP synthase produces ATP from ADP in the presence of a proton or sodium gradient. F-type ATPases consist of two structural domains, F(1) containing the extramembraneous catalytic core and F(0) containing the membrane proton channel, linked together by a central stalk and a peripheral stalk. During catalysis, ATP synthesis in the catalytic domain of F(1) is coupled via a rotary mechanism of the central stalk subunits to proton translocation. Component of the F(0) channel, it forms part of the peripheral stalk, linking F(1) to F(0). This chain is ATP synthase subunit b 1, found in Cereibacter sphaeroides (strain ATCC 17029 / ATH 2.4.9) (Rhodobacter sphaeroides).